The sequence spans 98 residues: MSPIYINLMMAFIFSLLGTLLFRSHLMSTLLCLEGMMLSLFIMVTSSALNTQSMITYVIPITMLVFGACEAAIGLALLVMISNTYGTDYVQNLNLLQC.

3 helical membrane passes run 2–22, 26–46, and 61–81; these read SPIYINLMMAFIFSLLGTLLF, LMSTLLCLEGMMLSLFIMVTS, and ITMLVFGACEAAIGLALLVMI.

It belongs to the complex I subunit 4L family. As to quaternary structure, core subunit of respiratory chain NADH dehydrogenase (Complex I) which is composed of 45 different subunits.

The protein resides in the mitochondrion inner membrane. The catalysed reaction is a ubiquinone + NADH + 5 H(+)(in) = a ubiquinol + NAD(+) + 4 H(+)(out). Core subunit of the mitochondrial membrane respiratory chain NADH dehydrogenase (Complex I) which catalyzes electron transfer from NADH through the respiratory chain, using ubiquinone as an electron acceptor. Part of the enzyme membrane arm which is embedded in the lipid bilayer and involved in proton translocation. The chain is NADH-ubiquinone oxidoreductase chain 4L (MT-ND4L) from Nephelomys albigularis (Tomes's rice rat).